Reading from the N-terminus, the 161-residue chain is C-type natriuretic peptide (161 aa).

The N-terminal stretch at 1-22 (MFASRLAALGLLLLALVLDGKP) is a signal peptide. The disordered stretch occupies residues 19–135 (DGKPAPPPQP…GGGGSRRLKG (117 aa)). A propeptide spanning residues 23-139 (APPPQPLRKA…SRRLKGLPKK (117 aa)) is cleaved from the precursor. Low complexity-rich tracts occupy residues 29-60 (LRKA…SSGP) and 76-93 (AAPT…AASR). Residues 94 to 104 (LLRDLRPDGKQ) are compositionally biased toward basic and acidic residues. The segment covering 120-130 (GGGGGGGGGGS) has biased composition (gly residues). C145 and C161 form a disulfide bridge.

This sequence belongs to the natriuretic peptide family. Expressed by the venom gland.

The protein resides in the secreted. Functionally, snake venom natriuretic peptide that has a vasorelaxant activity in rat aortic strips and a diuretic potency in anesthetized rats. May act by activating natriuretic receptors (NPR1 and/or NPR2). The protein is C-type natriuretic peptide of Rhabdophis tigrinus tigrinus (Tiger keelback snake).